Here is a 353-residue protein sequence, read N- to C-terminus: Photosystem II D2 protein (353 aa).

At T2 the chain carries N-acetylthreonine. T2 carries the post-translational modification Phosphothreonine. A helical membrane pass occupies residues 41–61; sequence CAYFALGGWFTGTTFVTSWYT. H118 contributes to the chlorophyll a binding site. Residues 125–141 form a helical membrane-spanning segment; it reads GFMLRQFELARSVQLRP. The pheophytin a site is built by Q130 and N143. The helical transmembrane segment at 153 to 166 threads the bilayer; the sequence is VFVSVFLIYPLGQS. A chlorophyll a-binding site is contributed by H198. Residues 208 to 228 traverse the membrane as a helical segment; it reads AALLCAIHGATVENTLFEDGD. H215 and F262 together coordinate a plastoquinone. Position 215 (H215) interacts with Fe cation. H269 contributes to the Fe cation binding site. A helical transmembrane segment spans residues 279–295; that stretch reads GLWMSAIGVVGLALNLR.

It belongs to the reaction center PufL/M/PsbA/D family. As to quaternary structure, PSII is composed of 1 copy each of membrane proteins PsbA, PsbB, PsbC, PsbD, PsbE, PsbF, PsbH, PsbI, PsbJ, PsbK, PsbL, PsbM, PsbT, PsbX, PsbY, PsbZ, Psb30/Ycf12, at least 3 peripheral proteins of the oxygen-evolving complex and a large number of cofactors. It forms dimeric complexes. The D1/D2 heterodimer binds P680, chlorophylls that are the primary electron donor of PSII, and subsequent electron acceptors. It shares a non-heme iron and each subunit binds pheophytin, quinone, additional chlorophylls, carotenoids and lipids. There is also a Cl(-1) ion associated with D1 and D2, which is required for oxygen evolution. The PSII complex binds additional chlorophylls, carotenoids and specific lipids. is required as a cofactor.

Its subcellular location is the plastid. It localises to the chloroplast thylakoid membrane. The catalysed reaction is 2 a plastoquinone + 4 hnu + 2 H2O = 2 a plastoquinol + O2. Photosystem II (PSII) is a light-driven water:plastoquinone oxidoreductase that uses light energy to abstract electrons from H(2)O, generating O(2) and a proton gradient subsequently used for ATP formation. It consists of a core antenna complex that captures photons, and an electron transfer chain that converts photonic excitation into a charge separation. The D1/D2 (PsbA/PsbD) reaction center heterodimer binds P680, the primary electron donor of PSII as well as several subsequent electron acceptors. D2 is needed for assembly of a stable PSII complex. The sequence is that of Photosystem II D2 protein from Drimys granadensis.